The sequence spans 330 residues: Ferric enterobactin transport system permease protein FepG (330 aa).

The Periplasmic segment spans residues 1–7 (MIYVSRR). The helical transmembrane segment at 8–28 (LLITCLLLVSACVVAGIWGLR) threads the bilayer. The Cytoplasmic segment spans residues 29-62 (SGAVTLETSQVFAALMGDAPRSMTMVVTEWRLPR). Residues 63-83 (VLMALLIGAALGVSGAIFQSL) traverse the membrane as a helical segment. Residues 84-92 (MRNPLGSPD) lie on the Periplasmic side of the membrane. A helical transmembrane segment spans residues 93 to 113 (VMGFNTGAWSGVLVAMVLFGQ). Residues 114 to 117 (DLTA) lie on the Cytoplasmic side of the membrane. A helical transmembrane segment spans residues 118-138 (IALSAMVGGIVTSLLVWLLAW). The Periplasmic segment spans residues 139–146 (RNGIDTFR). Residues 147–167 (LIIIGIGVRAMLVAFNTWLLL) traverse the membrane as a helical segment. The Cytoplasmic portion of the chain corresponds to 168 to 190 (KASLETALTAGLWNAGSLNGLTW). A helical transmembrane segment spans residues 191-211 (AKTSPSAPIIILMLIAAALLV). Residues 212–235 (RRMRLLEMGDDTACALGVSVERSR) are Periplasmic-facing. A helical membrane pass occupies residues 236 to 256 (LLMMLVAVVLTAAATALAGPI). The Cytoplasmic segment spans residues 257 to 275 (SFIALVAPHIARRISGTAR). A helical transmembrane segment spans residues 276-296 (WGLTQAALCGALLLLAADLCA). Residues 297-303 (QQLFMPY) lie on the Periplasmic side of the membrane. A helical transmembrane segment spans residues 304–324 (QLPVGVVTVSLGGIYLIVLLI). At 325–330 (QESRKK) the chain is on the cytoplasmic side.

It belongs to the binding-protein-dependent transport system permease family. FecCD subfamily. As to quaternary structure, the complex is composed of two ATP-binding proteins (FepC), two transmembrane proteins (FepD and FepG) and a solute-binding protein (FepB).

Its subcellular location is the cell inner membrane. Its function is as follows. Part of the ABC transporter complex FepBDGC involved in ferric enterobactin uptake. Responsible for the translocation of the substrate across the membrane. This Escherichia coli (strain K12) protein is Ferric enterobactin transport system permease protein FepG (fepG).